We begin with the raw amino-acid sequence, 397 residues long: Dual oxidase maturation factor 1 (397 aa).

A run of 2 helical transmembrane segments spans residues 26 to 46 (FVIF…LPGV) and 57 to 77 (YVLM…PCWA). N-linked (GlcNAc...) asparagine glycosylation occurs at Asn-109. A run of 3 helical transmembrane segments spans residues 191-211 (AAIW…LFLP), 218-238 (ILAT…LSPC), and 261-281 (CFYL…GLGI). Residues 324–376 (YGTNTTNSSRDKNDISSDKTAGSSGFQSRTSTCQSSASSASLRSQSSIETVHD) form a disordered region. 2 N-linked (GlcNAc...) asparagine glycosylation sites follow: Asn-327 and Asn-330. Residues 341–350 (DKTAGSSGFQ) show a composition bias toward polar residues. Low complexity predominate over residues 351-370 (SRTSTCQSSASSASLRSQSS).

It belongs to the DUOXA family. As to quaternary structure, interacts with bli-3 and tsp-15. Interacts with csnk-1. As to expression, expressed in the hypodermis, specifically in seam cells, the terminal bulb of the pharynx, the distal region of the gonadal arm, vulva, spermatheca and uterus.

The protein resides in the membrane. Plays a role in cuticle biogenesis. In complex with tsp-15 and the dual oxidase bli-3, promotes the generation of reactive oxygen species (ROS) and tyrosine cross-linking of collagen, thus stabilizing cuticular extracellular matrix. This is Dual oxidase maturation factor 1 from Caenorhabditis elegans.